Reading from the N-terminus, the 147-residue chain is D-aminoacyl-tRNA deacylase (147 aa).

Residues G136–P137 carry the Gly-cisPro motif, important for rejection of L-amino acids motif.

This sequence belongs to the DTD family. In terms of assembly, homodimer.

The protein resides in the cytoplasm. The catalysed reaction is glycyl-tRNA(Ala) + H2O = tRNA(Ala) + glycine + H(+). The enzyme catalyses a D-aminoacyl-tRNA + H2O = a tRNA + a D-alpha-amino acid + H(+). Functionally, an aminoacyl-tRNA editing enzyme that deacylates mischarged D-aminoacyl-tRNAs. Also deacylates mischarged glycyl-tRNA(Ala), protecting cells against glycine mischarging by AlaRS. Acts via tRNA-based rather than protein-based catalysis; rejects L-amino acids rather than detecting D-amino acids in the active site. By recycling D-aminoacyl-tRNA to D-amino acids and free tRNA molecules, this enzyme counteracts the toxicity associated with the formation of D-aminoacyl-tRNA entities in vivo and helps enforce protein L-homochirality. The sequence is that of D-aminoacyl-tRNA deacylase from Streptococcus equi subsp. zooepidemicus (strain MGCS10565).